The sequence spans 262 residues: 27 kDa lipoprotein antigen (262 aa).

Residues 1–28 (MSASCAVPRLTRFAVFAVAGATALSLSA) form the signal peptide. Composition is skewed to low complexity over residues 28 to 57 (ACGSSNKSSSTSTSTSTSTSTVTSAAPSST) and 148 to 158 (STPGGASSTPP). 2 disordered regions span residues 28 to 60 (ACGSSNKSSSTSTSTSTSTSTVTSAAPSSTPNA) and 138 to 171 (VNGTCPKPHESTPGGASSTPPSGSPSPAPAKPAW). Cys29 is lipidated: N-palmitoyl cysteine. Cys29 carries the S-diacylglycerol cysteine lipid modification.

It is found in the cell membrane. This Mycobacterium intracellulare protein is 27 kDa lipoprotein antigen (Mi43).